We begin with the raw amino-acid sequence, 308 residues long: Formamidopyrimidine-DNA glycosylase (308 aa).

Residue Pro2 is the Schiff-base intermediate with DNA of the active site. Glu3 (proton donor) is an active-site residue. Lys61 functions as the Proton donor; for beta-elimination activity in the catalytic mechanism. His100, Arg120, and Arg181 together coordinate DNA. Residues 267–301 form an FPG-type zinc finger; the sequence is AVYGQEGRPCPRCGALVRRDAFMNRSSFSCPVCQP. The active-site Proton donor; for delta-elimination activity is the Arg291.

This sequence belongs to the FPG family. As to quaternary structure, monomer. Zn(2+) is required as a cofactor.

The catalysed reaction is Hydrolysis of DNA containing ring-opened 7-methylguanine residues, releasing 2,6-diamino-4-hydroxy-5-(N-methyl)formamidopyrimidine.. The enzyme catalyses 2'-deoxyribonucleotide-(2'-deoxyribose 5'-phosphate)-2'-deoxyribonucleotide-DNA = a 3'-end 2'-deoxyribonucleotide-(2,3-dehydro-2,3-deoxyribose 5'-phosphate)-DNA + a 5'-end 5'-phospho-2'-deoxyribonucleoside-DNA + H(+). Involved in base excision repair of DNA damaged by oxidation or by mutagenic agents. Acts as a DNA glycosylase that recognizes and removes damaged bases. Has a preference for oxidized purines, such as 7,8-dihydro-8-oxoguanine (8-oxoG). Has AP (apurinic/apyrimidinic) lyase activity and introduces nicks in the DNA strand. Cleaves the DNA backbone by beta-delta elimination to generate a single-strand break at the site of the removed base with both 3'- and 5'-phosphates. This chain is Formamidopyrimidine-DNA glycosylase, found in Kineococcus radiotolerans (strain ATCC BAA-149 / DSM 14245 / SRS30216).